The sequence spans 480 residues: Ciliated left-right organizer protein containing ZP-N domains homolog (480 aa).

The N-terminal stretch at 1–23 is a signal peptide; sequence MKNQHNTFWVLCLLFVMFDETFS.

As to expression, expressed specifically by cells of the ciliated left-right organizer.

Its subcellular location is the secreted. This is Ciliated left-right organizer protein containing ZP-N domains homolog from Xenopus tropicalis (Western clawed frog).